A 321-amino-acid chain; its full sequence is L-Ala-D/L-Glu epimerase (321 aa).

Residues T124 and K149 each coordinate substrate. The active-site Proton acceptor; specific for (R)-substrate epimerization is the K151. Mg(2+) is bound by residues D176, E202, and D225. The Proton acceptor; specific for (S)-substrate epimerization role is filled by K247. C275, D297, and D299 together coordinate substrate.

Belongs to the mandelate racemase/muconate lactonizing enzyme family. As to quaternary structure, monomer. Mg(2+) is required as a cofactor.

The catalysed reaction is L-alanyl-L-glutamate = L-alanyl-D-glutamate. The protein operates within cell wall biogenesis; peptidoglycan recycling. Functionally, catalyzes the epimerization of L-Ala-D-Glu to L-Ala-L-Glu and has a role in the recycling of the murein peptide, of which L-Ala-D-Glu is a component. Is also able to catalyze the reverse reaction and the epimerization of all the L-Ala-X dipeptides, except L-Ala-L-Arg, L-Ala-L-Lys and L-Ala-L-Pro. Is also active with L-Gly-L-Glu, L-Phe-L-Glu, and L-Ser-L-Glu, but not with L-Glu-L-Glu, L-Lys-L-Glu, L-Pro-L-Glu, L-Lys-L-Ala, or D-Ala-D-Ala. This is L-Ala-D/L-Glu epimerase (ycjG) from Escherichia coli (strain K12).